The primary structure comprises 264 residues: MAFTKISLVLLLCLLGFFSETVKSQNCGCAPNLCCSQFGYCGTDDAYCGVGCRSGPCRGSGTPTGGSVGSIVTQGFFNNIINQAGNGCAGKRFYTRDSFVNAANTFPNFANSVTRREIATMFAHFTHETGHFCYIEEINGATRNYCQSSNTQYPCAPGKGYFGRGPIQLSWNYNYGACGQSLGLDLLRQPELVGSNPTVAFRTGLWFWMNSVRPVLNQGFGATIRAINGMECNGGNSGAVNARIGYYRDYCGQLGVDPGPNLSC.

The signal sequence occupies residues 1–24; sequence MAFTKISLVLLLCLLGFFSETVKS. Residues 25 to 59 form the Chitin-binding type-1 domain; it reads QNCGCAPNLCCSQFGYCGTDDAYCGVGCRSGPCRG. 4 disulfides stabilise this stretch: Cys-27/Cys-35, Cys-29/Cys-41, Cys-34/Cys-48, and Cys-52/Cys-57. Residues 66-264 are catalytic; it reads GSVGSIVTQG…GVDPGPNLSC (199 aa). Glu-128 serves as the catalytic Proton donor. N-linked (GlcNAc...) asparagine glycosylation occurs at Asn-261.

The protein belongs to the glycosyl hydrolase 19 family. Chitinase class I subfamily.

The enzyme catalyses Random endo-hydrolysis of N-acetyl-beta-D-glucosaminide (1-&gt;4)-beta-linkages in chitin and chitodextrins.. This chain is Endochitinase At2g43590, found in Arabidopsis thaliana (Mouse-ear cress).